The primary structure comprises 145 residues: Ribosome maturation factor RimP (145 aa).

The protein belongs to the RimP family.

The protein resides in the cytoplasm. Required for maturation of 30S ribosomal subunits. This chain is Ribosome maturation factor RimP, found in Borreliella burgdorferi (strain ATCC 35210 / DSM 4680 / CIP 102532 / B31) (Borrelia burgdorferi).